The primary structure comprises 110 residues: MNPYIYLGGAILAEVIGTTLMKFSEGFTRLWPSVGTIICYCASFWLLAQTLAYIPTGIAYAIWSGVGIVLISLLSWGFFGQRLDLPAIIGMMLICAGVLIINLLSRSTPH.

4 helical membrane passes run 4-21 (YIYL…TTLM), 34-52 (VGTI…QTLA), 58-80 (IAYA…GFFG), and 87-104 (AIIG…INLL).

This sequence belongs to the drug/metabolite transporter (DMT) superfamily. Small multidrug resistance (SMR) (TC 2.A.7.1) family. Homodimer. Forms an antiparallel dimeric structure. Also forms dimers of homodimers.

It localises to the cell inner membrane. Substrate identity influences both the ground-state and transition-state energies for the conformational exchange process, emphasizing the coupling between substrate binding and transport. Functionally, multidrug efflux protein that confers resistance to a wide range of toxic compounds, including ethidium, methyl viologen, acriflavine, tetraphenylphosphonium (TPP(+)), benzalkonium, propidium, dequalinium and the aminoglycoside antibiotics streptomycin and tobramycin. Can also transport the osmoprotectants betaine and choline. The drug efflux is coupled to an influx of protons. Can couple antiport of a drug to either one or two protons, performing both electrogenic and electroneutral transport of a single substrate. Simultaneously binds and cotransports proton and drug. The sequence is that of Multidrug transporter EmrE (emrE) from Escherichia coli (strain K12).